Reading from the N-terminus, the 492-residue chain is Catalase isozyme 1 (492 aa).

Active-site residues include His-65 and Asn-138. Tyr-348 serves as a coordination point for heme.

Belongs to the catalase family. As to quaternary structure, homotetramer. The cofactor is heme. In terms of tissue distribution, in whole endosperms (aleurones plus starchy endosperm), in isolated aleurones and in developing seeds.

The protein localises to the peroxisome. It localises to the glyoxysome. The catalysed reaction is 2 H2O2 = O2 + 2 H2O. Occurs in almost all aerobically respiring organisms and serves to protect cells from the toxic effects of hydrogen peroxide. This is Catalase isozyme 1 (CAT1) from Hordeum vulgare (Barley).